The following is a 644-amino-acid chain: MSSAVRSPRKKAASDTSDPDRTSSPYSLRETSKVPSRYRNEELYLSPSRSIKRTGSPKKSPAKRLNGGRDSPSVNSLTRNSSLTMLAKAALDYESSSCALEYIFQPKEERRPPRRALALSPPPAPSNDLLAKDLEMIEMHQNLVAGLDDLDNPANMTNEAVEHRDTQSFFNMFSTDQERSAMMKQFKTYKNQTSEDVSTFMRANIKKLYNLLRYKKARQWVMCEFFYSAIDEQIFKEENEFATIIRESFPNLKNWNLTRIEWRSIRKLLGKPRRCSKVFFEEERMYLEEKRMKIRSVYEGSYLNDPSIDLKDLPAKLPRPMVVGNRVFARIRNPYDGIYSGIIDAVIPKGFRIIFDKPDIPPTLVSDTEILLDGKLDLLSIAYFIEQANSKLPSGVRPFVAAVRDSSHPHLVRDVLVSRKIERSGGPLMGPNDERLNGKNAEMVGNFPLKFLVNLVKLTKLIDIKKGLIRQLNELNADAEIQNMTSDKYSKAFQEKYAKTIIDLEHVNQNIDINMNGIQDHHMYFSSNDISTSNMKPEAVRQMCSQQAGRFVEHCNQGLNVENVHALTLIQSLTAVLLQVRTMGTQKISAVDLQSLGDAISEIRTAIHPRNVAFFQDYVEVHMKQFHTIMLESGALAGTVSNRK.

Residues 1–77 (MSSAVRSPRK…GRDSPSVNSL (77 aa)) are disordered. Over residues 50–62 (SIKRTGSPKKSPA) the composition is skewed to basic residues.

It belongs to the lin-9 family. In terms of assembly, component of the DRM complex, at least composed of lin-9, lin-35, lin-37, lin-52, lin-53, lin-54- dpl-1 and efl-1. Interacts with zft-11; the interaction is required to suppress the activation of non-neuronal genes in neurons.

The protein resides in the nucleus. Its function is as follows. Synthetic multivulva class B (synMuvB) protein. SynMuvB proteins are required to repress the induction of vulval development by Ras signaling and probably act by forming the multiprotein DRM complex that represses transcription. Required for the development of sheath cells in the hermaphrodite gonad and for the development of the male spicule, rays and gonad. In association with the zinc finger protein ztf-11, negatively regulates the expression of non-neuronal genes during neurogenesis. This chain is Protein lin-9, found in Caenorhabditis elegans.